The sequence spans 878 residues: Alanine--tRNA ligase (878 aa).

Residues H564, H568, C666, and H670 each contribute to the Zn(2+) site.

It belongs to the class-II aminoacyl-tRNA synthetase family. Homotetramer. Zn(2+) is required as a cofactor.

The protein localises to the cytoplasm. It catalyses the reaction tRNA(Ala) + L-alanine + ATP = L-alanyl-tRNA(Ala) + AMP + diphosphate. Functionally, catalyzes the attachment of alanine to tRNA(Ala) in a two-step reaction: alanine is first activated by ATP to form Ala-AMP and then transferred to the acceptor end of tRNA(Ala). Also edits incorrectly charged Ser-tRNA(Ala) and Gly-tRNA(Ala) via its editing domain. The protein is Alanine--tRNA ligase of Buchnera aphidicola subsp. Acyrthosiphon pisum (strain APS) (Acyrthosiphon pisum symbiotic bacterium).